A 79-amino-acid chain; its full sequence is Sec-independent protein translocase protein TatA (79 aa).

Residues 1–21 (MGGWSSPSHWLIILLIVVLLF) form a helical membrane-spanning segment. The segment covering 49 to 61 (EVAKNTQKIEENK) has biased composition (basic and acidic residues). Positions 49–79 (EVAKNTQKIEENKNTTNNTNADASIDETKKA) are disordered.

It belongs to the TatA/E family. In terms of assembly, the Tat system comprises two distinct complexes: a TatABC complex, containing multiple copies of TatA, TatB and TatC subunits, and a separate TatA complex, containing only TatA subunits. Substrates initially bind to the TatABC complex, which probably triggers association of the separate TatA complex to form the active translocon.

It localises to the cell inner membrane. Its function is as follows. Part of the twin-arginine translocation (Tat) system that transports large folded proteins containing a characteristic twin-arginine motif in their signal peptide across membranes. TatA could form the protein-conducting channel of the Tat system. The polypeptide is Sec-independent protein translocase protein TatA (Campylobacter jejuni subsp. doylei (strain ATCC BAA-1458 / RM4099 / 269.97)).